We begin with the raw amino-acid sequence, 793 residues long: Ent-copalyl diphosphate synthase, chloroplastic (793 aa).

The transit peptide at 1-47 directs the protein to the chloroplast; the sequence is MPLASNPVAFLPSSTAHGDLPAAAFSRSSAGCLQLCRPLTPTSSLQC. 2 residues coordinate Mg(2+): Asp372 and Asp374. Residues 372–375 carry the DXDD motif motif; that stretch reads DIDD.

Belongs to the terpene synthase family. Mg(2+) is required as a cofactor.

The protein localises to the plastid. It localises to the chloroplast. It catalyses the reaction (2E,6E,10E)-geranylgeranyl diphosphate = ent-copalyl diphosphate. Its pathway is plant hormone biosynthesis; gibberellin biosynthesis. Functionally, catalyzes the conversion of geranylgeranyl diphosphate (GGPP) to the gibberellin precursor ent-copalyl diphosphate (CPP). This chain is Ent-copalyl diphosphate synthase, chloroplastic, found in Salvia miltiorrhiza (Chinese sage).